The sequence spans 397 residues: Cysteine desulfurase (397 aa).

Pyridoxal 5'-phosphate contacts are provided by residues Asn-148, Gln-176, and 196-198 (SAH). Lys-199 is modified (N6-(pyridoxal phosphate)lysine). Residue Thr-234 coordinates pyridoxal 5'-phosphate. The active-site Cysteine persulfide intermediate is the Cys-321. Cys-321 is a binding site for [2Fe-2S] cluster.

It belongs to the class-V pyridoxal-phosphate-dependent aminotransferase family. NifS/IscS subfamily. Homodimer. It depends on pyridoxal 5'-phosphate as a cofactor.

The enzyme catalyses (sulfur carrier)-H + L-cysteine = (sulfur carrier)-SH + L-alanine. Catalyzes the removal of elemental sulfur atoms from cysteine to produce alanine. Seems to participate in the biosynthesis of the nitrogenase metalloclusters by providing the inorganic sulfur required for the Fe-S core formation. This chain is Cysteine desulfurase, found in Klebsiella pneumoniae.